We begin with the raw amino-acid sequence, 385 residues long: Torsin-3A (385 aa).

An N-terminal signal peptide occupies residues 1–21 (MFLGALWLLLLLPLRPPGAQG). Residue N110 is glycosylated (N-linked (GlcNAc...) asparagine). 155-162 (GWSGTGKN) is an ATP binding site.

Belongs to the ClpA/ClpB family. Torsin subfamily. Interacts with TOR1AIP1. In terms of processing, N-glycosylated.

The protein localises to the cytoplasm. Its subcellular location is the endoplasmic reticulum lumen. This chain is Torsin-3A (Tor3a), found in Mus musculus (Mouse).